Consider the following 510-residue polypeptide: Inositol-3-phosphate synthase (510 aa).

Positions 70, 71, 72, 73, 143, 180, 190, 193, 230, 231, 232, 233, 281, 282, 306, 309, 340, 341, 342, 355, 393, 394, 422, and 423 each coordinate NAD(+).

The protein belongs to the myo-inositol 1-phosphate synthase family. Requires NAD(+) as cofactor.

It is found in the cytoplasm. Its subcellular location is the cytosol. It localises to the nucleus. It catalyses the reaction D-glucose 6-phosphate = 1D-myo-inositol 3-phosphate. It functions in the pathway polyol metabolism; myo-inositol biosynthesis; myo-inositol from D-glucose 6-phosphate: step 1/2. Functionally, key enzyme in myo-inositol biosynthesis pathway that catalyzes the conversion of glucose 6-phosphate to 1-myo-inositol 1-phosphate in a NAD-dependent manner. The chain is Inositol-3-phosphate synthase from Brassica napus (Rape).